The following is a 482-amino-acid chain: ATP synthase subunit beta, chloroplastic (482 aa).

168–175 (GGAGVGKT) contacts ATP.

Belongs to the ATPase alpha/beta chains family. In terms of assembly, F-type ATPases have 2 components, CF(1) - the catalytic core - and CF(0) - the membrane proton channel. CF(1) has five subunits: alpha(3), beta(3), gamma(1), delta(1), epsilon(1). CF(0) has four main subunits: a(1), b(1), b'(1) and c(9-12).

It localises to the plastid. It is found in the chloroplast thylakoid membrane. It carries out the reaction ATP + H2O + 4 H(+)(in) = ADP + phosphate + 5 H(+)(out). Its function is as follows. Produces ATP from ADP in the presence of a proton gradient across the membrane. The catalytic sites are hosted primarily by the beta subunits. The sequence is that of ATP synthase subunit beta, chloroplastic from Gnetum parvifolium (Small-leaved jointfir).